The following is a 190-amino-acid chain: Jupiter microtubule associated homolog 2 (190 aa).

N-acetylmethionine is present on methionine 1. The disordered stretch occupies residues 1 to 190; that stretch reads MFQVPDSEGG…PGGKSSISFY (190 aa). Serine 30 carries the phosphoserine modification. Threonine 35 is modified (phosphothreonine). Positions 35–44 are enriched in polar residues; the sequence is TPSSRPNRMA. Phosphoserine occurs at positions 45, 69, and 97. The segment covering 110–129 has biased composition (basic and acidic residues); that stretch reads KPKDHVFLCEGEEPKSDLKA. 2 positions are modified to phosphoserine: serine 132 and serine 144. Over residues 139-167 the composition is skewed to basic and acidic residues; it reads PGEKGSARKAGPAKEQEPMPTVDSHEPRL.

Belongs to the JUPITER family. In terms of assembly, monomer. Dimer. Interacts with TPCN1. In terms of tissue distribution, expressed in liver, kidney, prostate, testis and uterus.

Its subcellular location is the cytoplasm. It localises to the nucleus. Its function is as follows. Nicotinic acid adenine dinucleotide phosphate (NAADP) binding protein required for NAADP-evoked intracellular calcium release. Confers NAADP-sensitivity to the two pore channels (TPCs) complex. Enables NAADP to activate Ca(2+) release from the endoplasmic reticulum through ryanodine receptors. In terms of biological role, (Microbial infection) Involved in the endolysosomal trafficking of human coronavirus SARS-CoV-2. This Homo sapiens (Human) protein is Jupiter microtubule associated homolog 2.